We begin with the raw amino-acid sequence, 422 residues long: Probable ornithine aminotransferase, mitochondrial (422 aa).

Lys-273 carries the N6-(pyridoxal phosphate)lysine modification.

This sequence belongs to the class-III pyridoxal-phosphate-dependent aminotransferase family. The cofactor is pyridoxal 5'-phosphate.

It localises to the mitochondrion matrix. The enzyme catalyses a 2-oxocarboxylate + L-ornithine = L-glutamate 5-semialdehyde + an L-alpha-amino acid. The protein operates within amino-acid biosynthesis; L-proline biosynthesis; L-glutamate 5-semialdehyde from L-ornithine: step 1/1. This chain is Probable ornithine aminotransferase, mitochondrial, found in Caenorhabditis elegans.